Reading from the N-terminus, the 180-residue chain is Baseplate protein gp48 (180 aa).

Part of a complex composed of three DNA circularization protein N, three baseplate hub protein gp44 and three sub-complex wedge (made of two copies of each baseplate protein gp46, gp47 and gp48) that forms the baseplate.

Its subcellular location is the virion. It localises to the host cytoplasm. Component of the baseplate. The chain is Baseplate protein gp48 from Enterobacteriaceae (Bacteriophage Mu).